Reading from the N-terminus, the 446-residue chain is MSSSASTIVAIASAAGIGGVGIVRLSGAQSVQIAAQLGIARMQPRHAHYARFRDGQGAVIDDGIALWFNAPHSFTGEDVVELQGHGSPVLLRQLVARCIELGARQARAGEFSERAFLNGKLDLAQAEAIADLIAAGDLRAARAARRALDGVFSRRVDAVADTLTRLRIHVEAAIDFADEPLDTLGGNQLRDGLGQARNVLAQLLRDAERGRKLRDGLHAVLIGPPNAGKSSLLNALAGSDRAIVTDVAGTTRDTLHEAIQLDGFELTLVDTAGLRDGGDAIEREGMRRARAELERADLALVVLDARDPQAARDAIGDAIDAVPRQLWIHNKCDLLGNAVSLDANAIAVSAVTGQGLEQLHIRLRALALGDGVDSVEGEFSARTRHVQALRRAEQHVDAADLELGFEQLELAAEELRLAHEALGEITGKLSADDLLGKIFSSFCIGK.

Arg-24, Glu-81, and Lys-120 together coordinate (6S)-5-formyl-5,6,7,8-tetrahydrofolate. The region spanning 216–368 (GLHAVLIGPP…LHIRLRALAL (153 aa)) is the TrmE-type G domain. Position 226 (Asn-226) interacts with K(+). Residues 226 to 231 (NAGKSS), 245 to 251 (TDVAGTT), and 270 to 273 (DTAG) contribute to the GTP site. Mg(2+) is bound at residue Ser-230. K(+)-binding residues include Thr-245, Val-247, and Thr-250. Thr-251 is a binding site for Mg(2+). (6S)-5-formyl-5,6,7,8-tetrahydrofolate is bound at residue Lys-446.

This sequence belongs to the TRAFAC class TrmE-Era-EngA-EngB-Septin-like GTPase superfamily. TrmE GTPase family. As to quaternary structure, homodimer. Heterotetramer of two MnmE and two MnmG subunits. It depends on K(+) as a cofactor.

The protein resides in the cytoplasm. Functionally, exhibits a very high intrinsic GTPase hydrolysis rate. Involved in the addition of a carboxymethylaminomethyl (cmnm) group at the wobble position (U34) of certain tRNAs, forming tRNA-cmnm(5)s(2)U34. The sequence is that of tRNA modification GTPase MnmE from Xanthomonas euvesicatoria pv. vesicatoria (strain 85-10) (Xanthomonas campestris pv. vesicatoria).